The following is a 390-amino-acid chain: Lissencephaly-1 homolog (390 aa).

Residues 7–39 enclose the LisH domain; that stretch reads QREEINRAVAEYLQNNGYSEAFNMLLKEASLSE. The stretch at 54–80 forms a coiled coil; it reads TTVLRLQRKVNDLEAKLLESQQEINHG. 7 WD repeats span residues 104–145, 146–185, 189–228, 231–270, 272–313, 316–355, and 358–390; these read GHRL…KTLK, GHTD…DCLK, GHEH…CVFT, GHND…RNWY, EIMS…VIFT, AHEN…CMKA, and AHEH…WECR.

The protein belongs to the WD repeat LIS1/nudF family.

It is found in the cytoplasm. Its subcellular location is the cytoskeleton. The protein localises to the microtubule organizing center. It localises to the centrosome. Functionally, positively regulates the activity of the minus-end directed microtubule motor protein dynein. May enhance dynein-mediated microtubule sliding by targeting dynein to the microtubule plus end. Required for several dynein- and microtubule-dependent processes. The chain is Lissencephaly-1 homolog from Caenorhabditis briggsae.